A 274-amino-acid chain; its full sequence is Adenosylcobinamide-GDP ribazoletransferase (274 aa).

7 consecutive transmembrane segments (helical) span residues 46 to 66, 69 to 89, 117 to 137, 151 to 173, 192 to 212, 216 to 236, and 253 to 273; these read VMASVPFIGIVLGIVGGAIAF, TSLGVASIVAATVIVCFWELF, IIADPATGLIGMGACLISILI, WWMVMITPMIGRFCAIFGAHSRL, HTIIAWLCVLLVICIGVPLAM, ELITITILGLLCSVTLALVEI, and FIMHSATALCALVFAVGVGIV.

The protein belongs to the CobS family. The cofactor is Mg(2+).

It is found in the cell membrane. The enzyme catalyses alpha-ribazole + adenosylcob(III)inamide-GDP = adenosylcob(III)alamin + GMP + H(+). It carries out the reaction alpha-ribazole 5'-phosphate + adenosylcob(III)inamide-GDP = adenosylcob(III)alamin 5'-phosphate + GMP + H(+). It participates in cofactor biosynthesis; adenosylcobalamin biosynthesis; adenosylcobalamin from cob(II)yrinate a,c-diamide: step 7/7. Joins adenosylcobinamide-GDP and alpha-ribazole to generate adenosylcobalamin (Ado-cobalamin). Also synthesizes adenosylcobalamin 5'-phosphate from adenosylcobinamide-GDP and alpha-ribazole 5'-phosphate. This Corynebacterium diphtheriae (strain ATCC 700971 / NCTC 13129 / Biotype gravis) protein is Adenosylcobinamide-GDP ribazoletransferase.